Consider the following 259-residue polypeptide: Small ribosomal subunit protein eS4 (259 aa).

Positions 41 to 105 constitute an S4 RNA-binding domain; it reads LPLSVLLKER…TDQSFRILYD (65 aa). At T248 the chain carries Phosphothreonine. S258 is subject to Phosphoserine.

Belongs to the eukaryotic ribosomal protein eS4 family.

This is Small ribosomal subunit protein eS4 from Tetrahymena thermophila.